Here is a 700-residue protein sequence, read N- to C-terminus: Elongation factor G 2 (700 aa).

Residues 8–290 (ERYRNIGISA…AVLDFLPSPI (283 aa)) form the tr-type G domain. Residues 17 to 24 (AHIDAGKT), 88 to 92 (DTPGH), and 142 to 145 (NKMD) contribute to the GTP site.

Belongs to the TRAFAC class translation factor GTPase superfamily. Classic translation factor GTPase family. EF-G/EF-2 subfamily.

The protein localises to the cytoplasm. Its function is as follows. Catalyzes the GTP-dependent ribosomal translocation step during translation elongation. During this step, the ribosome changes from the pre-translocational (PRE) to the post-translocational (POST) state as the newly formed A-site-bound peptidyl-tRNA and P-site-bound deacylated tRNA move to the P and E sites, respectively. Catalyzes the coordinated movement of the two tRNA molecules, the mRNA and conformational changes in the ribosome. This Paraburkholderia xenovorans (strain LB400) protein is Elongation factor G 2.